A 609-amino-acid chain; its full sequence is Glutamine--fructose-6-phosphate aminotransferase [isomerizing] (609 aa).

Residue Cys2 is the Nucleophile; for GATase activity of the active site. Residues 2–217 enclose the Glutamine amidotransferase type-2 domain; sequence CGIVGAIAGR…DGDTAEIRRD (216 aa). 2 consecutive SIS domains span residues 285 to 425 and 458 to 599; these read AESV…LRGA and WAEC…VDKP. The For Fru-6P isomerization activity role is filled by Lys604.

Homodimer.

Its subcellular location is the cytoplasm. It catalyses the reaction D-fructose 6-phosphate + L-glutamine = D-glucosamine 6-phosphate + L-glutamate. Functionally, catalyzes the first step in hexosamine metabolism, converting fructose-6P into glucosamine-6P using glutamine as a nitrogen source. The chain is Glutamine--fructose-6-phosphate aminotransferase [isomerizing] from Xylella fastidiosa (strain Temecula1 / ATCC 700964).